The sequence spans 333 residues: Ribosomal protein L11 methyltransferase (333 aa).

Residues T160, G181, D203, and N267 each coordinate S-adenosyl-L-methionine.

The protein belongs to the methyltransferase superfamily. PrmA family.

The protein localises to the cytoplasm. It catalyses the reaction L-lysyl-[protein] + 3 S-adenosyl-L-methionine = N(6),N(6),N(6)-trimethyl-L-lysyl-[protein] + 3 S-adenosyl-L-homocysteine + 3 H(+). In terms of biological role, methylates ribosomal protein L11. This Lachnoclostridium phytofermentans (strain ATCC 700394 / DSM 18823 / ISDg) (Clostridium phytofermentans) protein is Ribosomal protein L11 methyltransferase.